The following is a 385-amino-acid chain: Tyrosine--tRNA ligase 1, cytoplasmic (385 aa).

The short motif at 77–85 (PSGRMHIAQ) is the 'HIGH' region element. Positions 200, 204, 207, and 222 each coordinate L-tyrosine. The 'KMSKS' region signature appears at 259–263 (KMSKS). An ATP-binding site is contributed by Lys262.

Belongs to the class-I aminoacyl-tRNA synthetase family.

Its subcellular location is the cytoplasm. It localises to the cytosol. It carries out the reaction tRNA(Tyr) + L-tyrosine + ATP = L-tyrosyl-tRNA(Tyr) + AMP + diphosphate + H(+). Catalyzes the attachment of tyrosine to tRNA(Tyr) in a two-step reaction: tyrosine is first activated by ATP to form Tyr-AMP and then transferred to the acceptor end of tRNA(Tyr). In Arabidopsis thaliana (Mouse-ear cress), this protein is Tyrosine--tRNA ligase 1, cytoplasmic.